Reading from the N-terminus, the 594-residue chain is Elongation factor 4 (594 aa).

In terms of domain architecture, tr-type G spans 2 to 184 (KNIRNFSIIA…TIVAKVPAPE (183 aa)). Residues 14–19 (DHGKST) and 131–134 (NKID) each bind GTP.

Belongs to the TRAFAC class translation factor GTPase superfamily. Classic translation factor GTPase family. LepA subfamily.

It localises to the cell inner membrane. The enzyme catalyses GTP + H2O = GDP + phosphate + H(+). Functionally, required for accurate and efficient protein synthesis under certain stress conditions. May act as a fidelity factor of the translation reaction, by catalyzing a one-codon backward translocation of tRNAs on improperly translocated ribosomes. Back-translocation proceeds from a post-translocation (POST) complex to a pre-translocation (PRE) complex, thus giving elongation factor G a second chance to translocate the tRNAs correctly. Binds to ribosomes in a GTP-dependent manner. This chain is Elongation factor 4, found in Francisella tularensis subsp. tularensis (strain WY96-3418).